Consider the following 303-residue polypeptide: Protease HtpX (303 aa).

The next 2 helical transmembrane spans lie at 4 to 24 (IGLF…VFGI) and 42 to 62 (IASL…ISLF). H149 is a Zn(2+) binding site. E150 is a catalytic residue. H153 provides a ligand contact to Zn(2+). The next 2 membrane-spanning stretches (helical) occupy residues 157–177 (GDMV…MFFA) and 200–220 (FVTS…IVMW). Position 226 (E226) interacts with Zn(2+).

The protein belongs to the peptidase M48B family. The cofactor is Zn(2+).

The protein localises to the cell inner membrane. This chain is Protease HtpX, found in Psychrobacter sp. (strain PRwf-1).